The chain runs to 649 residues: PTS system mannitol-specific EIICBA component (649 aa).

Residues 13-342 (FGRFLSNMVM…LLMKAQTSTE (330 aa)) form the PTS EIIC type-2 domain. A run of 6 helical transmembrane segments spans residues 25 to 46 (IGAF…WVPN), 51 to 71 (SLVG…TGGK), 135 to 156 (SAGI…PFVK), 166 to 186 (VNFL…EPAK), 274 to 293 (AIAG…AGLV), and 314 to 335 (LGVV…ALLM). One can recognise a PTS EIIB type-2 domain in the interval 384-475 (QSIIVACDAG…LVTQLLAAKR (92 aa)). Cysteine 390 acts as the Phosphocysteine intermediate; for EIIB activity in catalysis. Position 390 is a phosphocysteine; by EIIA (cysteine 390). Residues 504–646 (FQLQKENIHL…SDVLSILATS (143 aa)) enclose the PTS EIIA type-2 domain. Histidine 564 acts as the Tele-phosphohistidine intermediate; for EIIA activity in catalysis. The residue at position 564 (histidine 564) is a Phosphohistidine; by HPr.

In terms of assembly, homodimer. Post-translationally, an intramolecular phosphotransfer takes places between His-564 and Cys-390.

Its subcellular location is the cell inner membrane. It carries out the reaction D-mannitol(out) + N(pros)-phospho-L-histidyl-[protein] = D-mannitol 1-phosphate(in) + L-histidyl-[protein]. Functionally, the phosphoenolpyruvate-dependent sugar phosphotransferase system (sugar PTS), a major carbohydrate active transport system, catalyzes the phosphorylation of incoming sugar substrates concomitantly with their translocation across the cell membrane. This system is involved in D-mannitol transport. The sequence is that of PTS system mannitol-specific EIICBA component (mtlA) from Vibrio cholerae serotype O1 (strain ATCC 39315 / El Tor Inaba N16961).